A 294-amino-acid chain; its full sequence is Protoheme IX farnesyltransferase (294 aa).

9 helical membrane passes run 22 to 42 (VTQL…PELP), 46 to 66 (IVVA…AINC), 89 to 109 (ITVP…MWVL), 116 to 136 (LTMW…TIIL), 143 to 163 (NIVI…AAVA), 170 to 190 (AWIL…ALAL), 212 to 232 (FTQF…MLPF), 234 to 254 (VGMS…IFVW), and 272 to 292 (FAYS…DHYL).

It belongs to the UbiA prenyltransferase family. Protoheme IX farnesyltransferase subfamily.

The protein localises to the cell inner membrane. It catalyses the reaction heme b + (2E,6E)-farnesyl diphosphate + H2O = Fe(II)-heme o + diphosphate. It functions in the pathway porphyrin-containing compound metabolism; heme O biosynthesis; heme O from protoheme: step 1/1. In terms of biological role, converts heme B (protoheme IX) to heme O by substitution of the vinyl group on carbon 2 of heme B porphyrin ring with a hydroxyethyl farnesyl side group. This chain is Protoheme IX farnesyltransferase, found in Janthinobacterium sp. (strain Marseille) (Minibacterium massiliensis).